Consider the following 237-residue polypeptide: Maternal B9.10 protein (237 aa).

This sequence belongs to the BTG family.

This Xenopus laevis (African clawed frog) protein is Maternal B9.10 protein.